The primary structure comprises 397 residues: 1-deoxy-D-xylulose 5-phosphate reductoisomerase (397 aa).

8 residues coordinate NADPH: threonine 10, glycine 11, serine 12, isoleucine 13, glycine 36, lysine 37, asparagine 38, and asparagine 124. Lysine 125 provides a ligand contact to 1-deoxy-D-xylulose 5-phosphate. NADPH is bound at residue glutamate 126. Aspartate 150 is a Mn(2+) binding site. 4 residues coordinate 1-deoxy-D-xylulose 5-phosphate: serine 151, glutamate 152, serine 186, and histidine 209. Glutamate 152 provides a ligand contact to Mn(2+). Glycine 215 serves as a coordination point for NADPH. Residues serine 222, asparagine 227, lysine 228, and glutamate 231 each coordinate 1-deoxy-D-xylulose 5-phosphate. Residue glutamate 231 coordinates Mn(2+).

It belongs to the DXR family. As to quaternary structure, homodimer. Mg(2+) serves as cofactor. Requires Mn(2+) as cofactor.

It catalyses the reaction 2-C-methyl-D-erythritol 4-phosphate + NADP(+) = 1-deoxy-D-xylulose 5-phosphate + NADPH + H(+). It participates in isoprenoid biosynthesis; isopentenyl diphosphate biosynthesis via DXP pathway; isopentenyl diphosphate from 1-deoxy-D-xylulose 5-phosphate: step 1/6. Its function is as follows. Catalyzes the NADPH-dependent rearrangement and reduction of 1-deoxy-D-xylulose-5-phosphate (DXP) to 2-C-methyl-D-erythritol 4-phosphate (MEP). This Proteus mirabilis (strain HI4320) protein is 1-deoxy-D-xylulose 5-phosphate reductoisomerase.